The chain runs to 68 residues: uncharacterized protein (68 aa).

It to B.subtilis XtrA.

This is an uncharacterized protein from Bacillus subtilis (strain 168).